Reading from the N-terminus, the 489-residue chain is UBX domain-containing protein 7 (489 aa).

Alanine 2 carries the N-acetylalanine modification. The 53-residue stretch at 2 to 54 (AAHGGSAASSALKGLIQQFTTITGASESVGKHMLEACNNNLEMAVTMFLDGGG) folds into the UBA domain. A disordered region spans residues 56–77 (AEEPSTSSASVSTVRPHTEEEV). Over residues 59 to 70 (PSTSSASVSTVR) the composition is skewed to polar residues. Residue lysine 84 forms a Glycyl lysine isopeptide (Lys-Gly) (interchain with G-Cter in SUMO2) linkage. Lysine 99 participates in a covalent cross-link: Glycyl lysine isopeptide (Lys-Gly) (interchain with G-Cter in ubiquitin). A Glycyl lysine isopeptide (Lys-Gly) (interchain with G-Cter in SUMO2) cross-link involves residue lysine 134. Phosphoserine is present on residues serine 278, serine 280, serine 285, and serine 288. Residues 285–304 (SEDSQLEAAIRASLQETHFD) enclose the UIM domain. Residues 300 to 309 (ETHFDSTQTK) show a composition bias toward polar residues. The disordered stretch occupies residues 300-384 (ETHFDSTQTK…PGTATNHQGL (85 aa)). At threonine 306 the chain carries Phosphothreonine. Residues 352–366 (HKDLGHRKEENRRPL) show a composition bias toward basic and acidic residues. Residues 408–485 (VNGPKAQLML…GLCPQETVFV (78 aa)) form the UBX domain.

In terms of assembly, interacts with neddylated CUL2, ubiquitinated HIF1A, and VCP/p97.

Its subcellular location is the nucleus. Its function is as follows. Ubiquitin-binding adapter that links a subset of NEDD8-associated cullin ring ligases (CRLs) to the segregase VCP/p97, to regulate turnover of their ubiquitination substrates. In Homo sapiens (Human), this protein is UBX domain-containing protein 7 (UBXN7).